A 245-amino-acid chain; its full sequence is Probable octanoyltransferase 2 (245 aa).

One can recognise a BPL/LPL catalytic domain in the interval 38 to 227 (MEYKPVLYFQ…SIEKEFDIKE (190 aa)). Substrate contacts are provided by residues 89 to 96 (RGGYETYH), 157 to 159 (SIG), and 170 to 172 (GMA). C188 functions as the Acyl-thioester intermediate in the catalytic mechanism.

It belongs to the LipB family.

It localises to the cytoplasm. The enzyme catalyses octanoyl-[ACP] + L-lysyl-[protein] = N(6)-octanoyl-L-lysyl-[protein] + holo-[ACP] + H(+). It functions in the pathway protein modification; protein lipoylation via endogenous pathway; protein N(6)-(lipoyl)lysine from octanoyl-[acyl-carrier-protein]: step 1/2. Its function is as follows. Catalyzes the transfer of endogenously produced octanoic acid from octanoyl-acyl-carrier-protein onto the lipoyl domains of lipoate-dependent enzymes. Lipoyl-ACP can also act as a substrate although octanoyl-ACP is likely to be the physiological substrate. The chain is Probable octanoyltransferase 2 from Picrophilus torridus (strain ATCC 700027 / DSM 9790 / JCM 10055 / NBRC 100828 / KAW 2/3).